Reading from the N-terminus, the 115-residue chain is UPF0145 protein lp_2083 (115 aa).

This sequence belongs to the UPF0145 family.

The sequence is that of UPF0145 protein lp_2083 from Lactiplantibacillus plantarum (strain ATCC BAA-793 / NCIMB 8826 / WCFS1) (Lactobacillus plantarum).